Here is a 282-residue protein sequence, read N- to C-terminus: Putative phosphite transport system permease protein HtxC (282 aa).

4 helical membrane-spanning segments follow: residues 23–43 (HFATSVVVLSLLAVAWYVCQI), 81–101 (LAMATIGTIFATIIAFPLALM), 130–150 (VYALVFVAAVGFGPFSGVLAI), and 239–259 (FNKMITVLAVVLLMVSAIDFI). Residues 77–260 (AGETLAMATI…LMVSAIDFIS (184 aa)) enclose the ABC transmembrane type-1 domain.

Belongs to the binding-protein-dependent transport system permease family.

The protein localises to the cell inner membrane. Probably forms part of a binding-protein-dependent hypophosphite transporter. This is Putative phosphite transport system permease protein HtxC (htxC) from Stutzerimonas stutzeri (Pseudomonas stutzeri).